The primary structure comprises 111 residues: TPR repeat-containing protein associated with Hsp90 (111 aa).

An N-acetylserine modification is found at serine 2. 2 TPR repeats span residues 4–37 (FEKQ…QPQN) and 39–71 (VGYS…TSTA).

As to quaternary structure, component of the R2TP complex composed at least of RVB1, RVB2, TAH1 and PIH1. Also interacts with HSP90.

It localises to the cytoplasm. Its subcellular location is the nucleus. This chain is TPR repeat-containing protein associated with Hsp90 (TAH1), found in Saccharomyces cerevisiae (strain ATCC 204508 / S288c) (Baker's yeast).